Here is a 65-residue protein sequence, read N- to C-terminus: UPF0434 protein Mmwyl1_2153 (65 aa).

This sequence belongs to the UPF0434 family.

In Marinomonas sp. (strain MWYL1), this protein is UPF0434 protein Mmwyl1_2153.